A 416-amino-acid chain; its full sequence is UDP-N-acetylglucosamine 1-carboxyvinyltransferase (416 aa).

Lys22 to Asn23 contacts phosphoenolpyruvate. A UDP-N-acetyl-alpha-D-glucosamine-binding site is contributed by Arg91. Cys115 acts as the Proton donor in catalysis. Cys115 carries the 2-(S-cysteinyl)pyruvic acid O-phosphothioketal modification. Residues Arg120 to Leu124, Asp303, and Ile325 contribute to the UDP-N-acetyl-alpha-D-glucosamine site.

Belongs to the EPSP synthase family. MurA subfamily.

The protein localises to the cytoplasm. The enzyme catalyses phosphoenolpyruvate + UDP-N-acetyl-alpha-D-glucosamine = UDP-N-acetyl-3-O-(1-carboxyvinyl)-alpha-D-glucosamine + phosphate. The protein operates within cell wall biogenesis; peptidoglycan biosynthesis. Functionally, cell wall formation. Adds enolpyruvyl to UDP-N-acetylglucosamine. This Lawsonia intracellularis (strain PHE/MN1-00) protein is UDP-N-acetylglucosamine 1-carboxyvinyltransferase.